The primary structure comprises 513 residues: Light-independent protochlorophyllide reductase subunit B (513 aa).

D36 contributes to the [4Fe-4S] cluster binding site. D299 acts as the Proton donor in catalysis. 434 to 435 (GM) is a binding site for substrate.

It belongs to the ChlB/BchB/BchZ family. In terms of assembly, protochlorophyllide reductase is composed of three subunits; ChlL, ChlN and ChlB. Forms a heterotetramer of two ChlB and two ChlN subunits. [4Fe-4S] cluster serves as cofactor.

The protein resides in the plastid. Its subcellular location is the chloroplast. The enzyme catalyses chlorophyllide a + oxidized 2[4Fe-4S]-[ferredoxin] + 2 ADP + 2 phosphate = protochlorophyllide a + reduced 2[4Fe-4S]-[ferredoxin] + 2 ATP + 2 H2O. The protein operates within porphyrin-containing compound metabolism; chlorophyll biosynthesis (light-independent). Its function is as follows. Component of the dark-operative protochlorophyllide reductase (DPOR) that uses Mg-ATP and reduced ferredoxin to reduce ring D of protochlorophyllide (Pchlide) to form chlorophyllide a (Chlide). This reaction is light-independent. The NB-protein (ChlN-ChlB) is the catalytic component of the complex. The protein is Light-independent protochlorophyllide reductase subunit B of Chaetosphaeridium globosum (Charophycean green alga).